Here is a 222-residue protein sequence, read N- to C-terminus: Chromatin-associated protein SWI6 (222 aa).

The segment covering 1–15 (MPVIKKEELSQKKDL) has biased composition (basic and acidic residues). 2 disordered regions span residues 1–26 (MPVI…GLED) and 77–147 (ETQD…DRQY). The span at 16–26 (ESEEEDSGLED) shows a compositional bias: acidic residues. In terms of domain architecture, Chromo spans 28–87 (YEVEKVIKHRGKGKNIEFLVRWKGYGPEYDTWEPTENVASAEEAVAAYWETQDKTATAPR).

In terms of assembly, interacts with DMT5.

It is found in the nucleus. Its function is as follows. Recognizes and binds histone H3 tails methylated at 'Lys-9', leading to epigenetic repression. Localizes DMT5 to heterochromatin characterized by trimethylation of histone H3 tails at 'Lys-9'. The polypeptide is Chromatin-associated protein SWI6 (Cryptococcus neoformans var. grubii serotype A (strain H99 / ATCC 208821 / CBS 10515 / FGSC 9487) (Filobasidiella neoformans var. grubii)).